Here is a 473-residue protein sequence, read N- to C-terminus: Photosystem II CP43 reaction center protein (473 aa).

A propeptide spanning residues 1–14 (MKILYSLRRFYHVE) is cleaved from the precursor. N-acetylthreonine is present on threonine 15. Phosphothreonine is present on threonine 15. Transmembrane regions (helical) follow at residues 69–93 (LFEV…PHLA), 134–155 (LLGP…KDRN), 178–200 (KALY…RKIT), 255–275 (KPFA…LSYS), and 291–312 (WFNN…ASQA). Residue glutamate 367 participates in [CaMn4O5] cluster binding. Residues 447 to 471 (RARAAAAGFEKGIDRDLEPVLFMTP) traverse the membrane as a helical segment.

The protein belongs to the PsbB/PsbC family. PsbC subfamily. In terms of assembly, PSII is composed of 1 copy each of membrane proteins PsbA, PsbB, PsbC, PsbD, PsbE, PsbF, PsbH, PsbI, PsbJ, PsbK, PsbL, PsbM, PsbT, PsbX, PsbY, PsbZ, Psb30/Ycf12, at least 3 peripheral proteins of the oxygen-evolving complex and a large number of cofactors. It forms dimeric complexes. Binds multiple chlorophylls and provides some of the ligands for the Ca-4Mn-5O cluster of the oxygen-evolving complex. It may also provide a ligand for a Cl- that is required for oxygen evolution. PSII binds additional chlorophylls, carotenoids and specific lipids. is required as a cofactor.

It is found in the plastid. It localises to the chloroplast thylakoid membrane. Its function is as follows. One of the components of the core complex of photosystem II (PSII). It binds chlorophyll and helps catalyze the primary light-induced photochemical processes of PSII. PSII is a light-driven water:plastoquinone oxidoreductase, using light energy to abstract electrons from H(2)O, generating O(2) and a proton gradient subsequently used for ATP formation. This Lemna minor (Common duckweed) protein is Photosystem II CP43 reaction center protein.